We begin with the raw amino-acid sequence, 59 residues long: Large ribosomal subunit protein uL30 (59 aa).

It belongs to the universal ribosomal protein uL30 family. In terms of assembly, part of the 50S ribosomal subunit.

The protein is Large ribosomal subunit protein uL30 of Haemophilus influenzae (strain 86-028NP).